A 158-amino-acid chain; its full sequence is 2-C-methyl-D-erythritol 2,4-cyclodiphosphate synthase (158 aa).

Residues Asp-9 and His-11 each contribute to the a divalent metal cation site. 4-CDP-2-C-methyl-D-erythritol 2-phosphate-binding positions include 9 to 11 and 35 to 36; these read DAH and HS. An a divalent metal cation-binding site is contributed by His-43. 4-CDP-2-C-methyl-D-erythritol 2-phosphate-binding positions include 57–59, 62–66, 133–136, Phe-140, and Arg-143; these read DIG, FPDTD, and TTTE.

This sequence belongs to the IspF family. In terms of assembly, homotrimer. A divalent metal cation is required as a cofactor.

The enzyme catalyses 4-CDP-2-C-methyl-D-erythritol 2-phosphate = 2-C-methyl-D-erythritol 2,4-cyclic diphosphate + CMP. The protein operates within isoprenoid biosynthesis; isopentenyl diphosphate biosynthesis via DXP pathway; isopentenyl diphosphate from 1-deoxy-D-xylulose 5-phosphate: step 4/6. Its function is as follows. Involved in the biosynthesis of isopentenyl diphosphate (IPP) and dimethylallyl diphosphate (DMAPP), two major building blocks of isoprenoid compounds. Catalyzes the conversion of 4-diphosphocytidyl-2-C-methyl-D-erythritol 2-phosphate (CDP-ME2P) to 2-C-methyl-D-erythritol 2,4-cyclodiphosphate (ME-CPP) with a corresponding release of cytidine 5-monophosphate (CMP). The protein is 2-C-methyl-D-erythritol 2,4-cyclodiphosphate synthase of Methylococcus capsulatus (strain ATCC 33009 / NCIMB 11132 / Bath).